Here is a 387-residue protein sequence, read N- to C-terminus: Eukaryotic translation initiation factor 3 subunit M (387 aa).

A PCI domain is found at 181-340 (LSSKVMIELL…RKVHISSTMH (160 aa)).

The protein belongs to the eIF-3 subunit M family. As to quaternary structure, component of the eukaryotic translation initiation factor 3 (eIF-3) complex. The eIF-3 complex interacts with pix.

It localises to the cytoplasm. The protein resides in the golgi apparatus. Functionally, component of the eukaryotic translation initiation factor 3 (eIF-3) complex, which is involved in protein synthesis of a specialized repertoire of mRNAs and, together with other initiation factors, stimulates binding of mRNA and methionyl-tRNAi to the 40S ribosome. The eIF-3 complex specifically targets and initiates translation of a subset of mRNAs involved in cell proliferation. This is Eukaryotic translation initiation factor 3 subunit M from Drosophila ananassae (Fruit fly).